A 150-amino-acid chain; its full sequence is Large ribosomal subunit protein bL9 (150 aa).

It belongs to the bacterial ribosomal protein bL9 family.

Functionally, binds to the 23S rRNA. The polypeptide is Large ribosomal subunit protein bL9 (Herminiimonas arsenicoxydans).